The primary structure comprises 1363 residues: Spike glycoprotein (1363 aa).

The N-terminal stretch at 1–13 (MFLILLISLPTAF) is a signal peptide. The Extracellular portion of the chain corresponds to 14–1307 (AVIGDLKCTT…GTYEYYVKWP (1294 aa)). One can recognise a BetaCoV S1-NTD domain in the interval 15-298 (VIGDLKCTTV…DFMSEIKCKT (284 aa)). 5 disulfide bridges follow: Cys21–Cys165, Cys160–Cys193, Cys172–Cys252, Cys286–Cys296, and Cys331–Cys356. N-linked (GlcNAc...) asparagine; by host glycosylation is found at Asn59 and Asn133. Asn198 carries an N-linked (GlcNAc...) asparagine; by host glycan. Positions 329–617 (PDCNIEAWLN…DVNSGTTCST (289 aa)) constitute a BetaCoV S1-CTD domain. N-linked (GlcNAc...) asparagine; by host glycosylation is present at Asn359. Cystine bridges form between Cys374–Cys427 and Cys386–Cys615. Asn437, Asn649, Asn676, Asn696, Asn714, Asn739, and Asn788 each carry an N-linked (GlcNAc...) asparagine; by host glycan. Fusion peptide stretches follow at residues 914-935 (SAIE…VEAY) and 933-953 (EAYN…VQSY). Asn937 carries N-linked (GlcNAc...) asparagine; by host glycosylation. The cysteines at positions 938 and 949 are disulfide-linked. The tract at residues 1014–1064 (QKLIANAFNNALGAIQEGFDATNSALVKIQAVVNANAEALNNLLQQLSNRF) is heptad repeat 1. Residues 1043–1087 (QAVVNANAEALNNLLQQLSNRFGAISSSLQEILSRLDALEAQAQI) adopt a coiled-coil conformation. Residues Asn1194, Asn1224, Asn1234, Asn1253, Asn1267, and Asn1288 are each glycosylated (N-linked (GlcNAc...) asparagine; by host). The segment at 1258 to 1296 (APDLSLDYINVTFLDLQDEMNRLQEAIKVLNQSYINLKD) is heptad repeat 2. The stretch at 1269 to 1297 (TFLDLQDEMNRLQEAIKVLNQSYINLKDI) forms a coiled coil. The helical transmembrane segment at 1308–1328 (WYVWLLIGFAGVAMLVLLFFI) threads the bilayer. Over 1329–1363 (CCCTGCGTSCFKKCGGCCDDYTGHQELVIKTSHDD) the chain is Cytoplasmic. The KxHxx signature appears at 1359-1363 (TSHDD).

This sequence belongs to the betacoronaviruses spike protein family. In terms of assembly, homotrimer; each monomer consists of a S1 and a S2 subunit. The resulting peplomers protrude from the virus surface as spikes. Specific enzymatic cleavages in vivo yield mature proteins. The precursor is processed into S1 and S2 by host cell furin or another cellular protease to yield the mature S1 and S2 proteins. Additionally, a second cleavage leads to the release of a fusion peptide after viral attachment to host cell receptor. In terms of processing, the cytoplasmic Cys-rich domain is palmitoylated. Spike glycoprotein is digested within host endosomes.

The protein localises to the virion membrane. Its subcellular location is the host endoplasmic reticulum-Golgi intermediate compartment membrane. The protein resides in the host cell membrane. Functionally, attaches the virion to the cell membrane by interacting with host receptor, initiating the infection. Its function is as follows. Mediates fusion of the virion and cellular membranes by acting as a class I viral fusion protein. Under the current model, the protein has at least three conformational states: pre-fusion native state, pre-hairpin intermediate state, and post-fusion hairpin state. During viral and target cell membrane fusion, the coiled coil regions (heptad repeats) assume a trimer-of-hairpins structure, positioning the fusion peptide in close proximity to the C-terminal region of the ectodomain. The formation of this structure appears to drive apposition and subsequent fusion of viral and target cell membranes. Acts as a viral fusion peptide which is unmasked following S2 cleavage occurring upon virus endocytosis. The polypeptide is Spike glycoprotein (Bovine coronavirus (strain LSU-94LSS-051) (BCoV-LSU)).